The primary structure comprises 267 residues: Neural/ectodermal development factor IMP-L2 (267 aa).

A signal peptide spans 1-25 (MEAKMNLHVCALALLLFGSIATVRG). Ig-like C2-type domains are found at residues 48–149 (PRNR…KTIY) and 174–260 (PRII…TFVY). 2 cysteine pairs are disulfide-bonded: Cys-80–Cys-139 and Cys-195–Cys-244.

As to expression, detected in several sites including the ventral neuroectoderm, the tracheal pits, the pharynx and esophagus, and specific neuronal cell bodies, where it is primarily expressed.

The protein localises to the secreted. Its subcellular location is the extracellular space. In terms of biological role, essential developmental role during embryogenesis, in particular the normal development of the nervous system. May be involved in some aspect of cell adhesion. This is Neural/ectodermal development factor IMP-L2 (ImpL2) from Drosophila melanogaster (Fruit fly).